Reading from the N-terminus, the 369-residue chain is tRNA-specific 2-thiouridylase MnmA (369 aa).

Residues 7–14 (GISGGVDS) and methionine 33 contribute to the ATP site. Residues 93 to 95 (NPD) form an interaction with target base in tRNA region. Cysteine 98 functions as the Nucleophile in the catalytic mechanism. An intrachain disulfide couples cysteine 98 to cysteine 195. Glycine 123 is an ATP binding site. Residues 145 to 147 (KDQ) form an interaction with tRNA region. Cysteine 195 (cysteine persulfide intermediate) is an active-site residue. The interval 307–308 (RY) is interaction with tRNA.

It belongs to the MnmA/TRMU family. In terms of assembly, interacts with TusE.

The protein localises to the cytoplasm. The enzyme catalyses S-sulfanyl-L-cysteinyl-[protein] + uridine(34) in tRNA + AH2 + ATP = 2-thiouridine(34) in tRNA + L-cysteinyl-[protein] + A + AMP + diphosphate + H(+). Functionally, catalyzes the 2-thiolation of uridine at the wobble position (U34) of tRNA(Lys), tRNA(Glu) and tRNA(Gln), leading to the formation of s(2)U34, the first step of tRNA-mnm(5)s(2)U34 synthesis. Sulfur is provided by IscS, via a sulfur-relay system. Binds ATP and its substrate tRNAs. The protein is tRNA-specific 2-thiouridylase MnmA of Blochmanniella floridana.